We begin with the raw amino-acid sequence, 627 residues long: Sister chromatid cohesion 1 protein 1 (627 aa).

Disordered stretches follow at residues 211–294 (GDDE…TATS), 395–416 (MHNHHQTDHHERSDTSSQNLDS), and 461–510 (GDDV…VAEE). Basic and acidic residues-rich tracts occupy residues 254 to 263 (EQQENRRDGF), 272 to 282 (IPDKEEHDRPQ), and 395 to 408 (MHNHHQTDHHERSD). Residues 467–487 (MPSTPSARGAASINNIEISSK) are compositionally biased toward polar residues.

The protein belongs to the rad21 family. In terms of assembly, component of the cohesin complex. Isoform 2 is expressed at low levels in buds, leaves and roots, whereas expression of isoform 1 is confined to buds.

It is found in the nucleus. Functionally, involved in chromosome condensation, pairing and segregation during meiosis. Responsible for cohesion between replicated sister chromatids. The polypeptide is Sister chromatid cohesion 1 protein 1 (SYN1) (Arabidopsis thaliana (Mouse-ear cress)).